The primary structure comprises 381 residues: Mannitol-1-phosphate 5-dehydrogenase (381 aa).

Position 3–14 (3–14) interacts with NAD(+); sequence TLHFGAGNIGRG.

The protein belongs to the mannitol dehydrogenase family.

The enzyme catalyses D-mannitol 1-phosphate + NAD(+) = beta-D-fructose 6-phosphate + NADH + H(+). This chain is Mannitol-1-phosphate 5-dehydrogenase, found in Aeromonas salmonicida (strain A449).